We begin with the raw amino-acid sequence, 214 residues long: Probable adenylyl-sulfate kinase (214 aa).

ATP is bound at residue 13 to 20 (GLSGAGKT). Residue Ser-87 is the Phosphoserine intermediate of the active site. Residues 174–199 (WNRTNTFPLKSRPNPPHRHKSKSSRA) are disordered.

It belongs to the APS kinase family.

The catalysed reaction is adenosine 5'-phosphosulfate + ATP = 3'-phosphoadenylyl sulfate + ADP + H(+). The protein operates within sulfur metabolism; hydrogen sulfide biosynthesis; sulfite from sulfate: step 2/3. Its function is as follows. Catalyzes the synthesis of activated sulfate. The protein is Probable adenylyl-sulfate kinase of Pseudomonas aeruginosa.